The chain runs to 656 residues: Ankyrin repeat and SAM domain-containing protein 3 (656 aa).

The segment at 1–422 (MSELSDEASE…AESSPQTQRA (422 aa)) is interaction with NEK7. Phosphoserine occurs at positions 2 and 5. ANK repeat units lie at residues 34-64 (DVPL…DLNK), 68-97 (GGWT…SVNV), 101-130 (EGQT…ELEM), 134-163 (QGWT…NANV), 168-197 (CGFT…KVDA), and 201-220 (SGAT…IVAL). Asn96 carries the post-translational modification 3-hydroxyasparagine. A phosphoserine mark is found at Ser201, Ser225, Ser243, Ser244, and Ser245. 2 disordered regions span residues 235 to 265 (SPEK…GVSI) and 277 to 312 (GIGL…EEEG). A Phosphothreonine modification is found at Thr319. Residues Ser320, Ser368, Ser371, and Ser375 each carry the phosphoserine modification. The interval 346–425 (GPVQSSSSSE…SPQTQRAPYS (80 aa)) is disordered. Residues 425-488 (SGPQDLAALL…TSAIARWHSS (64 aa)) form the SAM domain. Residues 501-526 (ADRLEAEMQELAIQLHKRCEEVEATR) adopt a coiled-coil conformation. Phosphoserine is present on Ser541.

Homooligomer. Interacts (via SAM domain) with ANKS6 (via SAM domain). Interacts with BICC1. Interacts with NPHP1. Interacts with NEK8. Interacts with HIF1AN. Interacts with NEK7; this interaction alters the subcellular distribution of NEK7 by preventing its nuclear translocation. In terms of processing, hydroxylated at Asn-96, most probably by HIF1AN. Post-translationally, phosphorylations at Ser-5, Ser-225, Thr-319, Ser-320, Ser-368 and Ser-371 occur in a NEK7-dependent manner. Polyubiquitinated.

It localises to the cell projection. The protein resides in the cilium. Its subcellular location is the cytoplasm. Functionally, may be involved in vasopressin signaling in the kidney. In Homo sapiens (Human), this protein is Ankyrin repeat and SAM domain-containing protein 3 (ANKS3).